The chain runs to 798 residues: Protocadherin beta-14 (798 aa).

The N-terminal stretch at 1–26 (MEIRGALDLRKRQVLIFLVLLGLSRA) is a signal peptide. Residues 27 to 686 (GTESAHYSVA…APAQAQADSL (660 aa)) lie on the Extracellular side of the membrane. Cadherin domains lie at 35 to 133 (VAEE…SPTF), 138 to 242 (ILIK…APEF), 247 to 347 (YEVQ…PPEV), 352 to 451 (ITKR…APAF), and 456 to 561 (YTLF…SPFV). A disulfide bridge connects residues C96 and C102. N169 carries an N-linked (GlcNAc...) asparagine glycan. N-linked (GlcNAc...) asparagine glycosylation is found at N359, N418, and N436. N-linked (GlcNAc...) asparagine glycosylation is present at N567. In terms of domain architecture, Cadherin 6 spans 568–671 (GSAPCTELVP…LVDGFSQPYL (104 aa)). The helical transmembrane segment at 687-711 (TVYLVVALASVSSLFLFSVLLFVAV) threads the bilayer. At 712–798 (RLCRRSRAAS…FRNSFGLNIQ (87 aa)) the chain is on the cytoplasmic side.

Its subcellular location is the cell membrane. Potential calcium-dependent cell-adhesion protein. May be involved in the establishment and maintenance of specific neuronal connections in the brain. This chain is Protocadherin beta-14 (PCDHB14), found in Pan troglodytes (Chimpanzee).